Here is a 130-residue protein sequence, read N- to C-terminus: uncharacterized protein (130 aa).

The disordered stretch occupies residues 23 to 130 (SHLRLLPTAN…GAHQLSSPSS (108 aa)). The span at 30–45 (TANSPSGSNQPTNPNR) shows a compositional bias: polar residues.

This is an uncharacterized protein from Homo sapiens (Human).